The following is a 50-amino-acid chain: Large ribosomal subunit protein bL32c (50 aa).

Belongs to the bacterial ribosomal protein bL32 family.

The protein localises to the plastid. It localises to the chloroplast. This is Large ribosomal subunit protein bL32c from Lotus japonicus (Lotus corniculatus var. japonicus).